The following is a 120-amino-acid chain: Small ribosomal subunit protein uS19 (120 aa).

This sequence belongs to the universal ribosomal protein uS19 family.

The polypeptide is Small ribosomal subunit protein uS19 (RPS15) (Naegleria gruberi (Amoeba)).